A 689-amino-acid polypeptide reads, in one-letter code: Translation initiation factor IF-2 (689 aa).

Residues 41–109 (DYERVFGGGN…EAPAAEEREA (69 aa)) form a disordered region. The segment covering 61–70 (RKGRQKKRRR) has biased composition (basic residues). Residues 80–94 (RGPRAAAPSRPSRGR) are compositionally biased toward low complexity. Residues 96-109 (AAREEAPAAEEREA) show a composition bias toward basic and acidic residues. A tr-type G domain is found at 192–361 (EKPPVITVMG…LVVAELEELR (170 aa)). Positions 201–208 (GHVDHGKT) are G1. Position 201–208 (201–208 (GHVDHGKT)) interacts with GTP. A G2 region spans residues 226-230 (GITQH). A G3 region spans residues 247–250 (DTPG). Residues 247 to 251 (DTPGH) and 301 to 304 (NKID) contribute to the GTP site. The tract at residues 301–304 (NKID) is G4. A G5 region spans residues 337–339 (SAK).

Belongs to the TRAFAC class translation factor GTPase superfamily. Classic translation factor GTPase family. IF-2 subfamily.

Its subcellular location is the cytoplasm. Functionally, one of the essential components for the initiation of protein synthesis. Protects formylmethionyl-tRNA from spontaneous hydrolysis and promotes its binding to the 30S ribosomal subunits. Also involved in the hydrolysis of GTP during the formation of the 70S ribosomal complex. This chain is Translation initiation factor IF-2, found in Rubrobacter xylanophilus (strain DSM 9941 / JCM 11954 / NBRC 16129 / PRD-1).